Consider the following 181-residue polypeptide: Translation initiation factor IF-3 (181 aa).

It belongs to the IF-3 family. As to quaternary structure, monomer.

The protein resides in the cytoplasm. Functionally, IF-3 binds to the 30S ribosomal subunit and shifts the equilibrium between 70S ribosomes and their 50S and 30S subunits in favor of the free subunits, thus enhancing the availability of 30S subunits on which protein synthesis initiation begins. This Azotobacter vinelandii protein is Translation initiation factor IF-3.